The primary structure comprises 130 residues: Small ribosomal subunit protein uS9 (130 aa).

A disordered region spans residues arginine 106–arginine 130. Over residues valine 111–arginine 130 the composition is skewed to basic residues.

It belongs to the universal ribosomal protein uS9 family.

In Streptococcus pneumoniae (strain ATCC 700669 / Spain 23F-1), this protein is Small ribosomal subunit protein uS9.